The following is a 274-amino-acid chain: 3-methyl-2-oxobutanoate hydroxymethyltransferase (274 aa).

Residues D44 and D83 each contribute to the Mg(2+) site. 3-methyl-2-oxobutanoate contacts are provided by residues 44 to 45 (DS), D83, and K113. Residue E115 coordinates Mg(2+). Catalysis depends on E182, which acts as the Proton acceptor.

Belongs to the PanB family. Homodecamer; pentamer of dimers. It depends on Mg(2+) as a cofactor.

The protein resides in the cytoplasm. The catalysed reaction is 3-methyl-2-oxobutanoate + (6R)-5,10-methylene-5,6,7,8-tetrahydrofolate + H2O = 2-dehydropantoate + (6S)-5,6,7,8-tetrahydrofolate. Its pathway is cofactor biosynthesis; (R)-pantothenate biosynthesis; (R)-pantoate from 3-methyl-2-oxobutanoate: step 1/2. Catalyzes the reversible reaction in which hydroxymethyl group from 5,10-methylenetetrahydrofolate is transferred onto alpha-ketoisovalerate to form ketopantoate. The sequence is that of 3-methyl-2-oxobutanoate hydroxymethyltransferase from Campylobacter jejuni subsp. doylei (strain ATCC BAA-1458 / RM4099 / 269.97).